We begin with the raw amino-acid sequence, 321 residues long: Lipoyl synthase (321 aa).

[4Fe-4S] cluster is bound by residues Cys68, Cys73, Cys79, Cys94, Cys98, Cys101, and Ser308. The Radical SAM core domain occupies 80–297; it reads FNHGTATFMI…KEEALAMGFT (218 aa).

It belongs to the radical SAM superfamily. Lipoyl synthase family. [4Fe-4S] cluster serves as cofactor.

It is found in the cytoplasm. It catalyses the reaction [[Fe-S] cluster scaffold protein carrying a second [4Fe-4S](2+) cluster] + N(6)-octanoyl-L-lysyl-[protein] + 2 oxidized [2Fe-2S]-[ferredoxin] + 2 S-adenosyl-L-methionine + 4 H(+) = [[Fe-S] cluster scaffold protein] + N(6)-[(R)-dihydrolipoyl]-L-lysyl-[protein] + 4 Fe(3+) + 2 hydrogen sulfide + 2 5'-deoxyadenosine + 2 L-methionine + 2 reduced [2Fe-2S]-[ferredoxin]. Its pathway is protein modification; protein lipoylation via endogenous pathway; protein N(6)-(lipoyl)lysine from octanoyl-[acyl-carrier-protein]: step 2/2. Functionally, catalyzes the radical-mediated insertion of two sulfur atoms into the C-6 and C-8 positions of the octanoyl moiety bound to the lipoyl domains of lipoate-dependent enzymes, thereby converting the octanoylated domains into lipoylated derivatives. In Photorhabdus laumondii subsp. laumondii (strain DSM 15139 / CIP 105565 / TT01) (Photorhabdus luminescens subsp. laumondii), this protein is Lipoyl synthase.